The primary structure comprises 306 residues: B- and T-lymphocyte attenuator (306 aa).

The N-terminal stretch at 1–29 (MKTVPAMLGTPRLFREFFILHLGLWSILC) is a signal peptide. The Extracellular portion of the chain corresponds to 30-183 (EKATKRNDEE…ERPGRTWLLY (154 aa)). The 103-residue stretch at 37-139 (DEECPVQLTI…SQVINSHSVT (103 aa)) folds into the Ig-like V-type domain. Disulfide bonds link Cys-40–Cys-69, Cys-64–Cys-124, and Cys-78–Cys-85. N-linked (GlcNAc...) asparagine glycans are attached at residues Asn-74, Asn-81, Asn-101, Asn-119, Asn-148, and Asn-165. A helical transmembrane segment spans residues 184–204 (TLLPLGALLLLLACVCLLCFL). At 205-306 (KRIQGKEKKP…TEYASICVRS (102 aa)) the chain is on the cytoplasmic side.

Interacts with tyrosine phosphatases PTPN6/SHP-1 and PTPN11/SHP-2. Interacts with TNFRSF14/HVEM (via cysteine-rich domain 1). Phosphorylated on Tyr residues by TNFRSF14 and by antigen receptors cross-linking, both inducing association with PTPN6 and PTPN11. In terms of processing, N-glycosylated. As to expression, expressed in splenic T- and B-cells as well as lymph node tissues but very weakly in somatic tissues. Also expressed in macrophages, NK cells and dendritic cells. A polymorphic tissue distribution between several strains is seen.

It localises to the cell membrane. Its function is as follows. Inhibitory receptor on lymphocytes that negatively regulates antigen receptor signaling via PTPN6/SHP-1 and PTPN11/SHP-2. May interact in cis (on the same cell) or in trans (on other cells) with TNFRSF14. In cis interactions, appears to play an immune regulatory role inhibiting in trans interactions in naive T cells to maintain a resting state. In trans interactions, can predominate during adaptive immune response to provide survival signals to effector T cells. The polypeptide is B- and T-lymphocyte attenuator (Mus musculus (Mouse)).